The sequence spans 212 residues: Thymidylate kinase (212 aa).

10 to 17 serves as a coordination point for ATP; that stretch reads GPEGAGKT.

It belongs to the thymidylate kinase family.

The enzyme catalyses dTMP + ATP = dTDP + ADP. In terms of biological role, phosphorylation of dTMP to form dTDP in both de novo and salvage pathways of dTTP synthesis. The chain is Thymidylate kinase from Bacillus velezensis (strain DSM 23117 / BGSC 10A6 / LMG 26770 / FZB42) (Bacillus amyloliquefaciens subsp. plantarum).